We begin with the raw amino-acid sequence, 95 residues long: MKTLLLTLVVVTIVCLDLGYTIVCHTTATSPISAVTCPPGENLCYRKMWCDAFCSSRGKVVELGCAATCPSKKPYEEVTCCSTDKCNPHPKQRPG.

An N-terminal signal peptide occupies residues 1 to 21; sequence MKTLLLTLVVVTIVCLDLGYT. 5 cysteine pairs are disulfide-bonded: Cys-24–Cys-44, Cys-37–Cys-65, Cys-50–Cys-54, Cys-69–Cys-80, and Cys-81–Cys-86.

It belongs to the three-finger toxin family. Long-chain subfamily. Type II alpha-neurotoxin sub-subfamily. In terms of assembly, monomer in solution, homodimer in crystal state. In terms of tissue distribution, expressed by the venom gland.

The protein localises to the secreted. Functionally, binds with high affinity to muscular (tested on Torpedo marmorata, Kd=0.4 nM) and neuronal (tested on chimeric alpha-7/CHRNA7, Kd=0.95 nM) nicotinic acetylcholine receptor (nAChR) and inhibits acetylcholine from binding to the receptor, thereby impairing neuromuscular and neuronal transmission. It also shows an activity on GABA(A) receptors. It antagonises GABA-activated currents with high potency when tested on primary hippocampal neurons. It inhibits recombinantly expressed GABA(A) receptors composed of alpha-2-beta-2-gamma-2 (GABRA2-GABRB2-GABRG2) subunits with high potency (62.3% inhibition at 20 uM of toxin). It also shows a weaker inhibition on GABA(A) receptors composed of alpha-1-beta-2-gamma-2 (GABRA1-GABRB2-GABRG2) subunits, alpha-4-beta-2-gamma-2 (GABRA4-GABRB2-GABRG2) subunits, and alpha-5-beta-2-gamma-2 (GABRA5-GABRB2-GABRG2) subunits. A very weak inhibition is also observed on GABA(A) receptor composed of alpha-1-beta-3-gamma-2 (GABRA1-GABRB3-GABRG2). It has also been shown to bind and inhibit recombinant GABA(A) receptor beta-3/GABRB3 subunit (Kd=about 50 nM). In addition, it blocks the extracellular increase of dopamine evoked by nicotine only at the higher dose (4.2 uM). In vivo, when intraperitoneally injected into mice, induces flaccid paralysis of the limbs and respiratory distress, and causes death in a dose-dependent manner. The chain is Alpha-bungarotoxin, isoform A31 from Bungarus candidus (Malayan krait).